Reading from the N-terminus, the 371-residue chain is ETS-related transcription factor Elf-3 (371 aa).

The 87-residue stretch at 46-132 folds into the PNT domain; it reads NPQMSLEGTE…AQLRDLTSSS (87 aa). A 9aaTAD motif is present at residues 137-145; sequence SWIIELLEK. Positions 173–251 are disordered; that stretch reads GQQASPYHPG…HGKRKRGRPR (79 aa). The span at 181-216 shows a compositional bias: low complexity; the sequence is PGSCGAGAPSPGSSDVSTAGTGASRSSHSSDSGGSD. Residues 231 to 241 show a composition bias toward basic and acidic residues; that stretch reads GFRDCKKGDPK. The span at 242–251 shows a compositional bias: basic residues; it reads HGKRKRGRPR. The segment at residues 273-355 is a DNA-binding region (ETS); the sequence is THLWEFIRDI…DGRRLVYKFG (83 aa).

The protein belongs to the ETS family. As to quaternary structure, interacts with TBP. Interacts with CREBBP and EP300; these act as transcriptional coactivators of ELF3 and positively modulate its function. Interacts with XRCC5/KU86 and XRCC6/KU70; these inhibit the ability of ELF3 to bind DNA and negatively modulate its transcriptional activity. Associated with CLND7 and POU2F3. Interacts with ZNF768. Expressed exclusively in tissues containing a high content of terminally differentiated epithelial cells including mammary gland, colon, trachea, kidney, prostate, uterus, stomach and skin.

It localises to the cytoplasm. The protein localises to the nucleus. Functionally, transcriptional activator that binds and transactivates ETS sequences containing the consensus nucleotide core sequence GGA[AT]. Acts synergistically with POU2F3 to transactivate the SPRR2A promoter and with RUNX1 to transactivate the ANGPT1 promoter. Also transactivates collagenase, CCL20, CLND7, FLG, KRT8, NOS2, PTGS2, SPRR2B, TGFBR2 and TGM3 promoters. Represses KRT4 promoter activity. Involved in mediating vascular inflammation. May play an important role in epithelial cell differentiation and tumorigenesis. May be a critical downstream effector of the ERBB2 signaling pathway. May be associated with mammary gland development and involution. Plays an important role in the regulation of transcription with TATA-less promoters in preimplantation embryos, which is essential in preimplantation development. The sequence is that of ETS-related transcription factor Elf-3 from Homo sapiens (Human).